A 327-amino-acid polypeptide reads, in one-letter code: Eukaryotic translation initiation factor 3 subunit I (327 aa).

WD repeat units follow at residues 8–47 (GHQR…RLGT), 50–89 (GHIG…ALGK), 147–186 (EQQS…ELNS), 189–228 (DHTA…CLKT), and 286–327 (GHFG…HTFE).

It belongs to the eIF-3 subunit I family. As to quaternary structure, component of the eukaryotic translation initiation factor 3 (eIF-3) complex.

The protein resides in the cytoplasm. In terms of biological role, component of the eukaryotic translation initiation factor 3 (eIF-3) complex, which is involved in protein synthesis of a specialized repertoire of mRNAs and, together with other initiation factors, stimulates binding of mRNA and methionyl-tRNAi to the 40S ribosome. The eIF-3 complex specifically targets and initiates translation of a subset of mRNAs involved in cell proliferation. The chain is Eukaryotic translation initiation factor 3 subunit I from Anopheles gambiae (African malaria mosquito).